Here is a 67-residue protein sequence, read N- to C-terminus: Large ribosomal subunit protein bL32 (67 aa).

Residues 1–19 (MAVPKRKMSRANTRARRSQ) show a composition bias toward basic residues. Positions 1–21 (MAVPKRKMSRANTRARRSQWK) are disordered.

It belongs to the bacterial ribosomal protein bL32 family.

This chain is Large ribosomal subunit protein bL32, found in Micrococcus luteus (strain ATCC 4698 / DSM 20030 / JCM 1464 / CCM 169 / CCUG 5858 / IAM 1056 / NBRC 3333 / NCIMB 9278 / NCTC 2665 / VKM Ac-2230) (Micrococcus lysodeikticus).